Here is a 294-residue protein sequence, read N- to C-terminus: Cytidine deaminase (294 aa).

2 CMP/dCMP-type deaminase domains span residues 48 to 168 and 186 to 294; these read DEDA…FGPK and LTGD…VLLA. Substrate is bound at residue 89-91; sequence NME. Zn(2+) is bound at residue H102. E104 serves as the catalytic Proton donor. Residues C129 and C132 each coordinate Zn(2+).

Belongs to the cytidine and deoxycytidylate deaminase family. Homodimer. The cofactor is Zn(2+).

It catalyses the reaction cytidine + H2O + H(+) = uridine + NH4(+). It carries out the reaction 2'-deoxycytidine + H2O + H(+) = 2'-deoxyuridine + NH4(+). Functionally, this enzyme scavenges exogenous and endogenous cytidine and 2'-deoxycytidine for UMP synthesis. The protein is Cytidine deaminase of Shigella dysenteriae serotype 1 (strain Sd197).